Reading from the N-terminus, the 264-residue chain is 3-methyl-2-oxobutanoate hydroxymethyltransferase (264 aa).

2 residues coordinate Mg(2+): Asp-45 and Asp-84. 3-methyl-2-oxobutanoate is bound by residues 45-46, Asp-84, and Lys-112; that span reads DS. Position 114 (Glu-114) interacts with Mg(2+). Glu-181 serves as the catalytic Proton acceptor.

It belongs to the PanB family. Homodecamer; pentamer of dimers. It depends on Mg(2+) as a cofactor.

Its subcellular location is the cytoplasm. It carries out the reaction 3-methyl-2-oxobutanoate + (6R)-5,10-methylene-5,6,7,8-tetrahydrofolate + H2O = 2-dehydropantoate + (6S)-5,6,7,8-tetrahydrofolate. It participates in cofactor biosynthesis; (R)-pantothenate biosynthesis; (R)-pantoate from 3-methyl-2-oxobutanoate: step 1/2. Functionally, catalyzes the reversible reaction in which hydroxymethyl group from 5,10-methylenetetrahydrofolate is transferred onto alpha-ketoisovalerate to form ketopantoate. In Shewanella halifaxensis (strain HAW-EB4), this protein is 3-methyl-2-oxobutanoate hydroxymethyltransferase.